The following is a 362-amino-acid chain: Cobalt-precorrin-5B C(1)-methyltransferase (362 aa).

The protein belongs to the CbiD family.

The catalysed reaction is Co-precorrin-5B + S-adenosyl-L-methionine = Co-precorrin-6A + S-adenosyl-L-homocysteine. The protein operates within cofactor biosynthesis; adenosylcobalamin biosynthesis; cob(II)yrinate a,c-diamide from sirohydrochlorin (anaerobic route): step 6/10. Its function is as follows. Catalyzes the methylation of C-1 in cobalt-precorrin-5B to form cobalt-precorrin-6A. This is Cobalt-precorrin-5B C(1)-methyltransferase from Desulfotalea psychrophila (strain LSv54 / DSM 12343).